The following is a 308-amino-acid chain: Glutamyl-Q tRNA(Asp) synthetase (308 aa).

L-glutamate-binding positions include 19 to 23 (RFAPS) and Glu-55. Residues 22 to 32 (PSPSGELHFGS) carry the 'HIGH' region motif. Positions 111, 113, 125, and 129 each coordinate Zn(2+). Tyr-182 and Arg-200 together coordinate L-glutamate. Positions 238 to 242 (KLSKQ) match the 'KMSKS' region motif. Lys-241 is an ATP binding site.

The protein belongs to the class-I aminoacyl-tRNA synthetase family. GluQ subfamily. The cofactor is Zn(2+).

In terms of biological role, catalyzes the tRNA-independent activation of glutamate in presence of ATP and the subsequent transfer of glutamate onto a tRNA(Asp). Glutamate is transferred on the 2-amino-5-(4,5-dihydroxy-2-cyclopenten-1-yl) moiety of the queuosine in the wobble position of the QUC anticodon. The sequence is that of Glutamyl-Q tRNA(Asp) synthetase from Escherichia coli (strain K12 / MC4100 / BW2952).